The sequence spans 327 residues: Porphobilinogen deaminase (327 aa).

An S-(dipyrrolylmethanemethyl)cysteine modification is found at Cys251.

It belongs to the HMBS family. The cofactor is dipyrromethane.

It carries out the reaction 4 porphobilinogen + H2O = hydroxymethylbilane + 4 NH4(+). It participates in porphyrin-containing compound metabolism; protoporphyrin-IX biosynthesis; coproporphyrinogen-III from 5-aminolevulinate: step 2/4. Its function is as follows. Tetrapolymerization of the monopyrrole PBG into the hydroxymethylbilane pre-uroporphyrinogen in several discrete steps. This chain is Porphobilinogen deaminase (HEM3), found in Kluyveromyces lactis (strain ATCC 8585 / CBS 2359 / DSM 70799 / NBRC 1267 / NRRL Y-1140 / WM37) (Yeast).